The following is a 751-amino-acid chain: Proton-associated sugar transporter A (751 aa).

6 helical membrane-spanning segments follow: residues 93–113 (ILFG…PVLL), 123–143 (SLVW…LGAW), 155–175 (RPFI…LLNG), 191–211 (WGIL…DSAD), 233–253 (IHAL…GIHW), and 268–288 (VIYI…LVSI). Thr500 bears the Phosphothreonine mark. 6 consecutive transmembrane segments (helical) span residues 536-556 (GWLS…EVVF), 576-596 (VTMG…YSAI), 606-626 (VRTL…LATL), 630-650 (LYVV…LCTL), 688-708 (FLAQ…VGSA), and 710-730 (GVMY…SLCV).

Belongs to the glycoside-pentoside-hexuronide (GPH) cation symporter transporter (TC 2.A.2) family. In terms of tissue distribution, predominantly expressed in brain.

The protein resides in the membrane. It carries out the reaction D-galactose(in) + H(+)(in) = D-galactose(out) + H(+)(out). The enzyme catalyses D-glucose(out) + H(+)(out) = D-glucose(in) + H(+)(in). Proton-associated glucose transporter in the brain. In Rattus norvegicus (Rat), this protein is Proton-associated sugar transporter A.